The following is a 208-amino-acid chain: 3-demethoxyubiquinol 3-hydroxylase (208 aa).

Residues Glu-57, Glu-87, His-90, Glu-139, Glu-171, and His-174 each coordinate Fe cation.

It belongs to the COQ7 family. Fe cation serves as cofactor.

It localises to the cell membrane. The catalysed reaction is a 5-methoxy-2-methyl-3-(all-trans-polyprenyl)benzene-1,4-diol + AH2 + O2 = a 3-demethylubiquinol + A + H2O. Its pathway is cofactor biosynthesis; ubiquinone biosynthesis. Functionally, catalyzes the hydroxylation of 2-nonaprenyl-3-methyl-6-methoxy-1,4-benzoquinol during ubiquinone biosynthesis. In Burkholderia lata (strain ATCC 17760 / DSM 23089 / LMG 22485 / NCIMB 9086 / R18194 / 383), this protein is 3-demethoxyubiquinol 3-hydroxylase.